Here is a 624-residue protein sequence, read N- to C-terminus: 1-deoxy-D-xylulose-5-phosphate synthase (624 aa).

Thiamine diphosphate-binding positions include His74 and 115-117 (GHS). Asp146 contributes to the Mg(2+) binding site. Thiamine diphosphate-binding positions include 147-148 (GA), Asn175, Tyr286, and Glu367. A Mg(2+)-binding site is contributed by Asn175.

It belongs to the transketolase family. DXPS subfamily. Homodimer. Mg(2+) is required as a cofactor. Thiamine diphosphate serves as cofactor.

The enzyme catalyses D-glyceraldehyde 3-phosphate + pyruvate + H(+) = 1-deoxy-D-xylulose 5-phosphate + CO2. Its pathway is metabolic intermediate biosynthesis; 1-deoxy-D-xylulose 5-phosphate biosynthesis; 1-deoxy-D-xylulose 5-phosphate from D-glyceraldehyde 3-phosphate and pyruvate: step 1/1. Functionally, catalyzes the acyloin condensation reaction between C atoms 2 and 3 of pyruvate and glyceraldehyde 3-phosphate to yield 1-deoxy-D-xylulose-5-phosphate (DXP). The sequence is that of 1-deoxy-D-xylulose-5-phosphate synthase from Alkaliphilus oremlandii (strain OhILAs) (Clostridium oremlandii (strain OhILAs)).